The sequence spans 501 residues: Pyruvate kinase (501 aa).

Arg50 lines the substrate pocket. 4 residues coordinate K(+): Asn52, Ser54, Asp85, and Thr86. Residue 52–55 (NFSH) participates in ATP binding. ATP is bound by residues Arg92 and Lys178. A Mg(2+)-binding site is contributed by Glu243. Substrate is bound by residues Gly266, Asp267, and Thr299. Asp267 lines the Mg(2+) pocket.

This sequence belongs to the pyruvate kinase family. Homotetramer. Mg(2+) is required as a cofactor. It depends on K(+) as a cofactor.

The enzyme catalyses pyruvate + ATP = phosphoenolpyruvate + ADP + H(+). The protein operates within carbohydrate degradation; glycolysis; pyruvate from D-glyceraldehyde 3-phosphate: step 5/5. The chain is Pyruvate kinase (PYK1) from Naumovozyma castellii (Yeast).